Consider the following 254-residue polypeptide: MQALLEHFITQSTVYSLMAVVLVAFLESLALVGLILPGTVLMAGLGALIGSGELSFWHAWLAGIIGCLMGDWISFWLGWRFKKPLHRWSFLKKNKALLDKTEHALHQHSMFTILVGRFVGPTRPLVPMVAGMLDLPVAKFITPNIIGCLLWPPFYFLPGILAGAAIDIPAGMQSGEFKWLLLATAVFLWVGGWLCWRLWRSGKATDRLSHYLSRGRLLWLTPLISAIGVVALVVLIRHPLMPVYIDILRKVVGV.

Topologically, residues 1-7 (MQALLEH) are periplasmic. The next 2 membrane-spanning stretches (helical) occupy residues 8–28 (FITQ…FLES) and 29–49 (LALV…GALI). Over 50 to 58 (GSGELSFWH) the chain is Periplasmic. The helical transmembrane segment at 59 to 79 (AWLAGIIGCLMGDWISFWLGW) threads the bilayer. Over 80–144 (RFKKPLHRWS…LPVAKFITPN (65 aa)) the chain is Cytoplasmic. A helical membrane pass occupies residues 145-165 (IIGCLLWPPFYFLPGILAGAA). At 166–178 (IDIPAGMQSGEFK) the chain is on the periplasmic side. The chain crosses the membrane as a helical span at residues 179–199 (WLLLATAVFLWVGGWLCWRLW). The Cytoplasmic segment spans residues 200-215 (RSGKATDRLSHYLSRG). Residues 216–236 (RLLWLTPLISAIGVVALVVLI) traverse the membrane as a helical segment. Residues 237-254 (RHPLMPVYIDILRKVVGV) lie on the Periplasmic side of the membrane.

It belongs to the DedA family.

The protein localises to the cell inner membrane. This is Inner membrane protein YabI (yabI) from Escherichia coli (strain K12).